The primary structure comprises 376 residues: Glutamate 5-kinase (376 aa).

Residue Lys10 participates in ATP binding. Residues Ser50, Asp137, and Asn149 each coordinate substrate. 169-170 (TD) serves as a coordination point for ATP. The 79-residue stretch at 275-353 (RGRLVLDAGA…AEIAGVLGFM (79 aa)) folds into the PUA domain.

Belongs to the glutamate 5-kinase family.

Its subcellular location is the cytoplasm. The catalysed reaction is L-glutamate + ATP = L-glutamyl 5-phosphate + ADP. Its pathway is amino-acid biosynthesis; L-proline biosynthesis; L-glutamate 5-semialdehyde from L-glutamate: step 1/2. Functionally, catalyzes the transfer of a phosphate group to glutamate to form L-glutamate 5-phosphate. The protein is Glutamate 5-kinase of Alcanivorax borkumensis (strain ATCC 700651 / DSM 11573 / NCIMB 13689 / SK2).